Reading from the N-terminus, the 243-residue chain is Small ribosomal subunit protein uS3 (243 aa).

The KH type-2 domain maps to 39 to 110 (IRKFIHKKYG…QVRINVVEVE (72 aa)). The tract at residues 217–243 (QQLPVGATPRRRAGRRPQQFEDRSNEG) is disordered. A compositionally biased stretch (basic and acidic residues) spans 234–243 (QQFEDRSNEG).

The protein belongs to the universal ribosomal protein uS3 family. In terms of assembly, part of the 30S ribosomal subunit. Forms a tight complex with proteins S10 and S14.

Functionally, binds the lower part of the 30S subunit head. Binds mRNA in the 70S ribosome, positioning it for translation. This Synechococcus sp. (strain WH7803) protein is Small ribosomal subunit protein uS3.